The sequence spans 476 residues: Cysteine--tRNA ligase (476 aa).

Position 29 (Cys-29) interacts with Zn(2+). The 'HIGH' region motif lies at 31 to 41 (PTVYDYTHIGH). Zn(2+)-binding residues include Cys-209, His-234, and Glu-238. The 'KMSKS' region signature appears at 266-270 (KMSKS). Residue Lys-269 coordinates ATP.

The protein belongs to the class-I aminoacyl-tRNA synthetase family. Zn(2+) is required as a cofactor.

The protein localises to the cytoplasm. The enzyme catalyses tRNA(Cys) + L-cysteine + ATP = L-cysteinyl-tRNA(Cys) + AMP + diphosphate. The protein is Cysteine--tRNA ligase of Thermococcus kodakarensis (strain ATCC BAA-918 / JCM 12380 / KOD1) (Pyrococcus kodakaraensis (strain KOD1)).